Reading from the N-terminus, the 130-residue chain is Small ribosomal subunit protein uS9 (130 aa).

The segment at glycine 102–arginine 130 is disordered. Over residues lysine 111 to arginine 130 the composition is skewed to basic residues.

The protein belongs to the universal ribosomal protein uS9 family.

The chain is Small ribosomal subunit protein uS9 from Listeria monocytogenes serovar 1/2a (strain ATCC BAA-679 / EGD-e).